The following is a 464-amino-acid chain: Soluble pyridine nucleotide transhydrogenase (464 aa).

Residue 35–44 (DNRPLVGGNC) participates in FAD binding.

The protein belongs to the class-I pyridine nucleotide-disulfide oxidoreductase family. Requires FAD as cofactor.

It localises to the cytoplasm. It carries out the reaction NAD(+) + NADPH = NADH + NADP(+). Conversion of NADPH, generated by peripheral catabolic pathways, to NADH, which can enter the respiratory chain for energy generation. In Stutzerimonas stutzeri (strain A1501) (Pseudomonas stutzeri), this protein is Soluble pyridine nucleotide transhydrogenase.